The primary structure comprises 606 residues: ATP-dependent rRNA helicase spb4 (606 aa).

The Q motif motif lies at 1 to 29; that stretch reads MSFQSINIDKWLKNAVAAQGFKKMTPVQA. Positions 32 to 213 constitute a Helicase ATP-binding domain; sequence IPLFLKNKDL…KIAGLRNSVR (182 aa). 45-52 serves as a coordination point for ATP; sequence AVTGSGKT. Positions 161–164 match the DEAD box motif; the sequence is DEAD. In terms of domain architecture, Helicase C-terminal spans 246-400; the sequence is CMIHLLCTIE…ALDLSRLKVL (155 aa). The disordered stretch occupies residues 521–574; that stretch reads KQKEVKEKRNTRREKRKSKKEFLKAQKNEASNNLKQEIVSKAGAQETENDDLID. Residues 521 to 601 adopt a coiled-coil conformation; sequence KQKEVKEKRN…KSKKRKNQAS (81 aa). Positions 529–539 are enriched in basic residues; sequence RNTRREKRKSK.

Belongs to the DEAD box helicase family. DDX55/SPB4 subfamily. Component of pre-60S ribosomal complexes.

The protein localises to the nucleus. The protein resides in the nucleolus. It carries out the reaction ATP + H2O = ADP + phosphate + H(+). Its function is as follows. ATP-binding RNA helicase involved in the biogenesis of 60S ribosomal subunits. Binds 90S pre-ribosomal particles and dissociates from pre-60S ribosomal particles after processing of 27SB pre-rRNA. Required for the normal formation of 18S rRNA through the processing of pre-rRNAs at sites A0, A1 and A2, and the normal formation of 25S and 5.8S rRNAs through the processing of pre-rRNAs at sites C1 and C2. This is ATP-dependent rRNA helicase spb4 from Schizosaccharomyces pombe (strain 972 / ATCC 24843) (Fission yeast).